The following is a 161-amino-acid chain: Large ribosomal subunit protein uL16 (161 aa).

Residues 140–161 form a disordered region; sequence LNKGNYKPAKTPVTADDSESSS.

This sequence belongs to the universal ribosomal protein uL16 family. As to quaternary structure, part of the 50S ribosomal subunit.

Binds 23S rRNA and is also seen to make contacts with the A and possibly P site tRNAs. This chain is Large ribosomal subunit protein uL16, found in Prochlorococcus marinus (strain NATL2A).